Here is an 87-residue protein sequence, read N- to C-terminus: Large ribosomal subunit protein bL31B (87 aa).

This sequence belongs to the bacterial ribosomal protein bL31 family. Type B subfamily. As to quaternary structure, part of the 50S ribosomal subunit.

The protein is Large ribosomal subunit protein bL31B of Klebsiella pneumoniae (strain 342).